The primary structure comprises 217 residues: Small ribosomal subunit protein uS3 (217 aa).

Positions 38-106 constitute a KH type-2 domain; it reads IRKFINKELA…QVHINIIEIK (69 aa).

This sequence belongs to the universal ribosomal protein uS3 family. As to quaternary structure, part of the 30S ribosomal subunit. Forms a tight complex with proteins S10 and S14.

Binds the lower part of the 30S subunit head. Binds mRNA in the 70S ribosome, positioning it for translation. The protein is Small ribosomal subunit protein uS3 of Streptococcus equi subsp. equi (strain 4047).